The sequence spans 259 residues: Ubiquitin-conjugating enzyme E2 J2 (259 aa).

At 1–226 (MSSTSSKRAP…AGLQQANRHH (226 aa)) the chain is on the cytoplasmic side. Residues 12 to 162 (TATQRLKQDY…DKVFCELFPE (151 aa)) form the UBC core domain. The Glycyl thioester intermediate role is filled by C94. Residues 227-247 (GLLGGALANLFVIVGFAAFAY) traverse the membrane as a helical; Anchor for type IV membrane protein segment. At 248–259 (TVKYVLRSIAQE) the chain is on the lumenal side.

This sequence belongs to the ubiquitin-conjugating enzyme family. Auto-ubiquitinated.

It is found in the endoplasmic reticulum membrane. It carries out the reaction S-ubiquitinyl-[E1 ubiquitin-activating enzyme]-L-cysteine + [E2 ubiquitin-conjugating enzyme]-L-cysteine = [E1 ubiquitin-activating enzyme]-L-cysteine + S-ubiquitinyl-[E2 ubiquitin-conjugating enzyme]-L-cysteine.. It participates in protein modification; protein ubiquitination. Catalyzes the covalent attachment of ubiquitin to other proteins. Seems to function in the selective degradation of misfolded membrane proteins from the endoplasmic reticulum (ERAD). In cooperation with the GATOR2 complex, catalyzes 'Lys-6'-linked ubiquitination of NPRL2. This chain is Ubiquitin-conjugating enzyme E2 J2 (UBE2J2), found in Homo sapiens (Human).